We begin with the raw amino-acid sequence, 142 residues long: UPF0179 protein PH1477 (142 aa).

This sequence belongs to the UPF0179 family.

This chain is UPF0179 protein PH1477, found in Pyrococcus horikoshii (strain ATCC 700860 / DSM 12428 / JCM 9974 / NBRC 100139 / OT-3).